A 362-amino-acid polypeptide reads, in one-letter code: DNA replication and repair protein RecF (362 aa).

Residue 31 to 38 (GDNAAGKT) coordinates ATP.

This sequence belongs to the RecF family.

Its subcellular location is the cytoplasm. The RecF protein is involved in DNA metabolism; it is required for DNA replication and normal SOS inducibility. RecF binds preferentially to single-stranded, linear DNA. It also seems to bind ATP. This chain is DNA replication and repair protein RecF, found in Hydrogenovibrio crunogenus (strain DSM 25203 / XCL-2) (Thiomicrospira crunogena).